The chain runs to 598 residues: MPCVQAQYGSSPQGASPASQSYSYHSSGEYSSDFLTPEFVKFSMDLTNTEITATTSLPSFSTFMDNYSTGYDVKPPCLYQMPLSGQQSSIKVEDIQMHNYQQHSHLPPQSEEMMPHSGSVYYKPSSPPTPSTPGFQVQHSPMWDDPGSLHNFHQNYVATTHMIEQRKTPVSRLSLFSFKQSRPGTPVSSCQMRFDGPLHVPMNPEPAGSHHVVDGQTFAVPNPIRKPASMGFPGLQIGHASQLLDTQVPSPPSRGSPSNEGLCAVCGDNAACQHYGVRTCEGCKGFFKRTVQKNAKYVCLANKNCPVDKRRRNRCQYCRFQKCLAVGMVKEVVRTDSLKGRRGRLPSKPKSPQDPSPPSPPVSLISALVRAHVDSNPAMTSLDYSRFQANPDYQMSGDDTQHIQQFYDLLTGSMEIIRGWAEKIPGFADLPKADQDLLFESAFLELFVLRLAYRSNPVEGKLIFCNGVVLHRLQCVRGFGEWIDSIVEFSSNLQNMNIDISAFSCIAALAMVTERHGLKEPKRVEELQNKIVNCLKDHVTFNNGGLNRPNYLSKLLGKLPELRTLCTQGLQRIFYLKLEDLVPPPAIIDKLFLDTLPF.

Residues 1 to 22 form a disordered region; sequence MPCVQAQYGSSPQGASPASQSY. A compositionally biased stretch (low complexity) spans 8 to 22; sequence YGSSPQGASPASQSY. Positions 260-335 form a DNA-binding region, nuclear receptor; the sequence is EGLCAVCGDN…VGMVKEVVRT (76 aa). NR C4-type zinc fingers lie at residues 263-283 and 299-323; these read CAVC…CEGC and CLAN…FQKC. The short motif at 287–314 is the Bipartite nuclear localization signal (NLS1) element; it reads FKRTVQKNAKYVCLANKNCPVDKRRRNR. The disordered stretch occupies residues 337–361; sequence SLKGRRGRLPSKPKSPQDPSPPSPP. Positions 338–350 match the Nuclear localization signal (NLS1) motif; the sequence is LKGRRGRLPSKPK. Residues 352–361 are compositionally biased toward pro residues; the sequence is PQDPSPPSPP. Positions 360–595 constitute an NR LBD domain; sequence PPVSLISALV…AIIDKLFLDT (236 aa). A nuclear export sequence (NES1) motif is present at residues 443–452; the sequence is FLELFVLRLA. The short motif at 568–577 is the nuclear export sequence (NES2) element; it reads QGLQRIFYLK.

It belongs to the nuclear hormone receptor family. NR4 subfamily. Interacts with SFPQ, NCOR2, SIN3A and HADC1. The interaction with NCOR2 increases in the absence of PITX3. Interacts with PER2. Shows a ubiquitous distribution in the cerebral cortex, hippocampus, thalamus, amygdala, and midbrain. Expression increases in prenatally stressed adult offspring in the ventral tegmental area, whereas no changes are observed in the substantia nigra area (at protein level). Not expressed in quiescent liver but is rapidly induced following partial hepatectomy and is specific to hepatic growth as it is not induced in other mitogen-treated cells. Expressed at very low levels in the lung, spleen and stomach and at high levels in the brain.

It is found in the cytoplasm. The protein localises to the nucleus. Transcriptional regulator which is important for the differentiation and maintenance of meso-diencephalic dopaminergic (mdDA) neurons during development. It is crucial for expression of a set of genes such as SLC6A3, SLC18A2, TH and DRD2 which are essential for development of mdDA neurons. May confer liver-specific regulation of delayed-early genes induced later in the G1 phase of regeneration along with NR4A1. The chain is Nuclear receptor subfamily 4 group A member 2 (Nr4a2) from Rattus norvegicus (Rat).